Reading from the N-terminus, the 544-residue chain is Chaperonin GroEL 2 (544 aa).

ATP is bound by residues 29–32 (TLGP), 86–90 (DGTTT), glycine 413, 479–481 (NAA), and aspartate 495.

The protein belongs to the chaperonin (HSP60) family. In terms of assembly, forms a cylinder of 14 subunits composed of two heptameric rings stacked back-to-back. Interacts with the co-chaperonin GroES.

It localises to the cytoplasm. It carries out the reaction ATP + H2O + a folded polypeptide = ADP + phosphate + an unfolded polypeptide.. In terms of biological role, together with its co-chaperonin GroES, plays an essential role in assisting protein folding. The GroEL-GroES system forms a nano-cage that allows encapsulation of the non-native substrate proteins and provides a physical environment optimized to promote and accelerate protein folding. This Synechococcus sp. (strain WH7803) protein is Chaperonin GroEL 2.